Reading from the N-terminus, the 285-residue chain is Acetyl-coenzyme A carboxylase carboxyl transferase subunit beta (285 aa).

A CoA carboxyltransferase N-terminal domain is found at 29–285 (IMTKCPKCKK…ILKIHQEVTK (257 aa)). Cys33, Cys36, Cys52, and Cys55 together coordinate Zn(2+). The C4-type zinc-finger motif lies at 33-55 (CPKCKKIMYTKELAENLNVCFNC).

Belongs to the AccD/PCCB family. As to quaternary structure, acetyl-CoA carboxylase is a heterohexamer composed of biotin carboxyl carrier protein (AccB), biotin carboxylase (AccC) and two subunits each of ACCase subunit alpha (AccA) and ACCase subunit beta (AccD). It depends on Zn(2+) as a cofactor.

It is found in the cytoplasm. It catalyses the reaction N(6)-carboxybiotinyl-L-lysyl-[protein] + acetyl-CoA = N(6)-biotinyl-L-lysyl-[protein] + malonyl-CoA. Its pathway is lipid metabolism; malonyl-CoA biosynthesis; malonyl-CoA from acetyl-CoA: step 1/1. In terms of biological role, component of the acetyl coenzyme A carboxylase (ACC) complex. Biotin carboxylase (BC) catalyzes the carboxylation of biotin on its carrier protein (BCCP) and then the CO(2) group is transferred by the transcarboxylase to acetyl-CoA to form malonyl-CoA. The sequence is that of Acetyl-coenzyme A carboxylase carboxyl transferase subunit beta from Staphylococcus aureus (strain MSSA476).